A 596-amino-acid polypeptide reads, in one-letter code: UvrABC system protein C (596 aa).

The GIY-YIG domain occupies 14–91 (DQPGCYLMKD…IKLHDPKYNV (78 aa)). Positions 196 to 231 (EAVKKELEVKMLAAAENLEFERAKEFRDQIAHIDTV) constitute a UVR domain.

It belongs to the UvrC family. Interacts with UvrB in an incision complex.

The protein localises to the cytoplasm. Functionally, the UvrABC repair system catalyzes the recognition and processing of DNA lesions. UvrC both incises the 5' and 3' sides of the lesion. The N-terminal half is responsible for the 3' incision and the C-terminal half is responsible for the 5' incision. The sequence is that of UvrABC system protein C from Lysinibacillus sphaericus (strain C3-41).